The primary structure comprises 1168 residues: ATP-dependent DNA helicase mph1 (1168 aa).

Composition is skewed to polar residues over residues 24 to 38 and 59 to 68; these read NITSHHPSNSKQLAS and PTVSQGQATA. The segment at 24–132 is disordered; sequence NITSHHPSNS…PFRADMPPEQ (109 aa). Positions 71–88 are enriched in low complexity; sequence RAKTASKPTTSATTSRPS. Residues 89 to 104 show a composition bias toward polar residues; sequence LAQSSQRKNLRQTTLW. Residues 162-330 form the Helicase ATP-binding domain; the sequence is IVKNGLFNNT…DVIDNLGISH (169 aa). 175-182 serves as a coordination point for ATP; that stretch reads LPTGLGKT. Positions 278–281 match the DEAH box motif; it reads DEAH. One can recognise a Helicase C-terminal domain in the interval 506 to 665; sequence LVNHFMDAGE…GSRFTFRHDL (160 aa). 2 disordered regions span residues 690-717 and 830-1168; these read SQNPELPEPKRSAARMRTKPAKKKFNMP and APAN…DDQE. The span at 701–714 shows a compositional bias: basic residues; the sequence is SAARMRTKPAKKKF. The segment covering 895–907 has biased composition (polar residues); sequence TAKTKSTGVSKQT. The span at 920 to 936 shows a compositional bias: acidic residues; that stretch reads DCEEGGNEYDGNVDDDE. Residues 941–959 show a composition bias toward basic residues; sequence RNFRSKGRGRGSGRGKKSQ. The span at 985-996 shows a compositional bias: acidic residues; it reads GSDDGADLEDFI. The segment covering 1001–1030 has biased composition (polar residues); sequence EVTSSLQHRPRGSTSPTTAPDAGSSSLSSK.

Belongs to the DEAD box helicase family. DEAH subfamily. FANCM sub-subfamily. In terms of assembly, interacts with the MHF histone-fold complex to form the FANCM-MHF complex.

It localises to the nucleus. It carries out the reaction ATP + H2O = ADP + phosphate + H(+). Its function is as follows. ATP-dependent DNA helicase involved in DNA damage repair by homologous recombination and in genome maintenance. Capable of unwinding D-loops. Plays a role in limiting crossover recombinants during mitotic DNA double-strand break (DSB) repair. Component of a FANCM-MHF complex which promotes gene conversion at blocked replication forks, probably by reversal of the stalled fork. In Neurospora crassa (strain ATCC 24698 / 74-OR23-1A / CBS 708.71 / DSM 1257 / FGSC 987), this protein is ATP-dependent DNA helicase mph1.